The sequence spans 290 residues: Putative heme oxygenase 3 (290 aa).

Residues 1 to 12 are compositionally biased toward acidic residues; that stretch reads MSSEVETAEAVD. Residues 1 to 33 form a disordered region; that stretch reads MSSEVETAEAVDESEKNSMASEKENHSKIADFS. Basic and acidic residues predominate over residues 13 to 33; that stretch reads ESEKNSMASEKENHSKIADFS. HRM repeat units lie at residues 238–243 and 255–260; these read KCPFNA and NCPFQM.

The protein belongs to the heme oxygenase family. In terms of tissue distribution, found in the spleen, liver, thymus, prostate, heart, kidney, brain and testis.

The catalysed reaction is heme b + 3 reduced [NADPH--hemoprotein reductase] + 3 O2 = biliverdin IXalpha + CO + Fe(2+) + 3 oxidized [NADPH--hemoprotein reductase] + 3 H2O + H(+). Functionally, heme oxygenase cleaves the heme ring at the alpha methene bridge to form biliverdin. Biliverdin is subsequently converted to bilirubin by biliverdin reductase. Heme oxygenase 3 could be implicated in some heme-dependent regulatory role in the cell. This chain is Putative heme oxygenase 3 (Hmox3), found in Rattus norvegicus (Rat).